Reading from the N-terminus, the 350-residue chain is uncharacterized protein (350 aa).

The signal sequence occupies residues 1 to 27; sequence MKNKKRVLIASSLSCAILLLSAATTQA. Positions 28-71 are disordered; the sequence is NSAHKDSQDQNKKEHVDKSQQKEKRNVTNKDKNSTVPDDIGKNG. The span at 30–60 shows a compositional bias: basic and acidic residues; sequence AHKDSQDQNKKEHVDKSQQKEKRNVTNKDKN.

This sequence belongs to the aerolysin family.

This is an uncharacterized protein from Staphylococcus aureus (strain MSSA476).